The primary structure comprises 69 residues: Disintegrin VLO5B (69 aa).

In terms of domain architecture, Disintegrin spans 1-66 (MNSANPCCDP…DCPRNPWKSE (66 aa)). 4 disulfides stabilise this stretch: Cys7-Cys30, Cys21-Cys27, Cys26-Cys51, and Cys39-Cys58. The Cell attachment site; atypical (MLD) signature appears at 43–45 (MLD).

This sequence belongs to the disintegrin family. Dimeric disintegrin subfamily. In terms of assembly, heterodimer with VLO5A; disulfide-linked. As to expression, expressed by the venom gland.

Its subcellular location is the secreted. In terms of biological role, poor inhibitor of platelet aggregation. The disintegrin inhibits the adhesion of the alpha-4/beta-1 (ITGA4/ITGB1) integrin to VCAM-1. Inhibition on alpha-2b/beta-3 (ITGA2B/ITGB3) is low. This Macrovipera lebetina obtusa (Levant blunt-nosed viper) protein is Disintegrin VLO5B.